Consider the following 239-residue polypeptide: Phosducin-like protein 2 (239 aa).

The stretch at 26-87 (TEDELFDLIK…IQQMKVEAEL (62 aa)) forms a coiled coil. A Phosducin domain is found at 36-196 (EAAEMATEAE…TTVNDIEWQL (161 aa)). The segment covering 42 to 59 (TEAEKNEKLENASLKDLK) has biased composition (basic and acidic residues). Disordered regions lie at residues 42 to 64 (TEAE…MEDD) and 212 to 239 (ITLA…DSDD). The segment at 90–239 (FGELKEISEP…DESDNSDSDD (150 aa)) is thioredoxin fold. Residues 214 to 224 (LARKKSQKSRY) show a composition bias toward basic residues. Over residues 230-239 (DESDNSDSDD) the composition is skewed to acidic residues.

This sequence belongs to the phosducin family.

The polypeptide is Phosducin-like protein 2 (phlp2) (Dictyostelium discoideum (Social amoeba)).